We begin with the raw amino-acid sequence, 129 residues long: Large ribosomal subunit protein bL17 (129 aa).

Belongs to the bacterial ribosomal protein bL17 family. In terms of assembly, part of the 50S ribosomal subunit. Contacts protein L32.

The chain is Large ribosomal subunit protein bL17 from Actinobacillus succinogenes (strain ATCC 55618 / DSM 22257 / CCUG 43843 / 130Z).